The following is a 656-amino-acid chain: Chaperone protein DnaK (656 aa).

Thr-204 carries the post-translational modification Phosphothreonine; by autocatalysis. The interval 607–656 is disordered; the sequence is VYAKKGGAAGAPPGGEAEGEPQAQAGGKKEDVVDAEFEEVKDEKKKDEDK. Residues 620–632 show a composition bias toward low complexity; sequence GGEAEGEPQAQAG. The span at 647–656 shows a compositional bias: basic and acidic residues; the sequence is KDEKKKDEDK.

Belongs to the heat shock protein 70 family.

In terms of biological role, acts as a chaperone. The protein is Chaperone protein DnaK of Coxiella burnetii (strain CbuK_Q154) (Coxiella burnetii (strain Q154)).